The sequence spans 329 residues: Protein-arginine N-acetylglucosaminyltransferase NleB (329 aa).

The N-beta-linked (GlcNAc) arginine; by autocatalysis glycan is linked to arginine 13. 48-50 (QWF) contributes to the UDP-N-acetyl-alpha-D-glucosamine binding site. An N-beta-linked (GlcNAc) arginine; by autocatalysis glycan is attached at arginine 53. Tyrosine 72 contributes to the UDP-N-acetyl-alpha-D-glucosamine binding site. An N-beta-linked (GlcNAc) arginine; by autocatalysis glycan is attached at arginine 159. 219 to 222 (YLDA) serves as a coordination point for UDP-N-acetyl-alpha-D-glucosamine. The DXD motif signature appears at 221–223 (DAD). Residue aspartate 223 coordinates Mn(2+). Catalysis depends on glutamate 253, which acts as the Proton acceptor. N-beta-linked (GlcNAc) arginine; by autocatalysis glycosylation is present at arginine 293. Residues asparagine 320 and serine 322 each coordinate Mn(2+). UDP-N-acetyl-alpha-D-glucosamine contacts are provided by residues serine 322 and 327 to 329 (SSW).

This sequence belongs to the glycosyltransferase NleB family. It depends on Mn(2+) as a cofactor. Auto-glycosylated: arginine GlcNAcylation is required for activity toward death domain-containing host target proteins.

It is found in the secreted. It localises to the host cell. The catalysed reaction is L-arginyl-[protein] + UDP-N-acetyl-alpha-D-glucosamine = N(omega)-(N-acetyl-beta-D-glucosaminyl)-L-arginyl-[protein] + UDP + H(+). Its function is as follows. Protein-arginine N-acetylglucosaminyltransferase effector that disrupts TNF signaling in infected cells, including NF-kappa-B signaling, apoptosis and necroptosis. Acts by catalyzing the transfer of a single N-acetylglucosamine (GlcNAc) to a conserved arginine residue in the death domain of host proteins FADD, TNFRSF1A and RIPK1: arginine GlcNAcylation prevents homotypic/heterotypic death domain interactions and assembly of the oligomeric TNF-alpha receptor complex, thereby disrupting TNF signaling. Has preference for host FADD as substrate compared to TNFRSF1A and RIPK1. Also acts on host proteins without a death domain: catalyzes GlcNAcylation of host GAPDH protein, thereby preventing GAPDH interaction with TRAF2 and TRAF3, leading to inhibit NF-kappa-B signaling and type I interferon production, respectively. Also displays intra-bacterial activity by mediating GlcNAcylation of glutathione synthetase GshB. Catalyzes auto-GlcNAcylation, which is required for activity toward death domain-containing host target proteins. The sequence is that of Protein-arginine N-acetylglucosaminyltransferase NleB from Citrobacter rodentium.